The chain runs to 104 residues: Small ribosomal subunit protein bS18c (104 aa).

Residues 84–104 (DKQFERSESTPRTIGLRTRNK) form a disordered region.

It belongs to the bacterial ribosomal protein bS18 family. In terms of assembly, part of the 30S ribosomal subunit.

Its subcellular location is the plastid. It is found in the chloroplast. The polypeptide is Small ribosomal subunit protein bS18c (Cucumis sativus (Cucumber)).